A 476-amino-acid polypeptide reads, in one-letter code: DnaJ homolog subfamily C member 7 homolog (476 aa).

Positions 1–22 are disordered; sequence MTEVETTHMNAGTESQQEPAEL. A compositionally biased stretch (polar residues) spans 7–18; that stretch reads THMNAGTESQQE. 7 TPR repeats span residues 23 to 56, 59 to 92, 143 to 176, 177 to 210, 223 to 256, 261 to 294, and 295 to 328; these read AEKQKAIGNAFYKEKKYAEAIKAYTEAIDLGSDS, AIYYSNRAATYMQIGEFELALCDAKQSDRIKPDV, MSWMYLKAQVYIFQNDMDRAQKIAHDVLRLNPKN, VEALVLRGKVMYYSGENAKAITHFQEALKLDPDC, LENTKNQGNDLFRQGNYQDAYEKYSEALQIDPDN, AKLYMNRATVLLRLKRPEEALSDSDNALAIDSSY, and LKGLKVRAKAHEALEKWEEAVRDVQSAIELDASD. The region spanning 349 to 414 is the J domain; it reads DHYKILGVSK…ESRRRFDSGV (66 aa).

It localises to the cytoplasm. This Schizosaccharomyces pombe (strain 972 / ATCC 24843) (Fission yeast) protein is DnaJ homolog subfamily C member 7 homolog.